The chain runs to 987 residues: MATGFTRPAAAPKRPQRRLTWLIPLLMILGALVPTVVDLYTDWLWFGEVDFRGVFNKVIATRIGLFVGFGLLAGIVTFLAGWFTYRGRPDELEFFDPDSPVVQYRAAVEKGVHRFLVVLPVVIGIAAGFLGQQAWQTVQLFFNRQDFGVSDQQFGMDYGFYAFTLPALRLVVSTFSVLLVVAFLIALVGHYLLGGIRAGNQAAGVKGSITNYAKVQLAVTGGLYLLVRMASYWLDRYSLLNNSHETFTGGSYTDINAVLPAKIVLLVISAVVAISFFSVIVTKDLRIPAISTVLMIVSSLAIGNAWPIMMERFSVSPNRAEKESEYISRNIEATRYAYGITDDAVTYKDNWGAKGASSEKVASDSATVSNIRLLDPEIISPTFTQQQQLRNFYGFPKSLAMDRYVIDGELRDFVVAARELDPNALKENQRDWINRHTVYTHGNGIVAAQANQVDEVARDVGSARGGYPVYTVSDLQTTDKEAQELGIVVKEPRIYYGPVIASATDGADYAVVGSENDSSVEYDTDSSTYTYQGKGGVNIGNVINRAAFAMRYQELNLILSDRVNGNSKILYDRDPRERVHNVAPWLTTDSTTYPAVIDGRVKWIVDGYTTLTSLPYAERTSLSEATNDTTAQVGNSAQRLVTDNVGYIRNSVKAVVDSYDGSVDLYEFDENDPVLKAWKGVFPGTVKAKSEISEELMNHLRYPEDMFKVQRKMLARYHVDDARDFFTNDRFWSVPSDPSATEGQKDVAQPAYYVVAADPDTGKPSFQLITPFRGLQREYLAAHMSVSSDPDNYGKITVRVLPTDTLTQGPKQAQDTMMSSDQIASDRTLWKDTNDLFNGNLLTLPVGDGDILYVEPLYSQRKNQASAFPKLLRVLVSYQGKVGYAPTIAEALSQVGIDPKEAQDLGEAKGLKPESQNRDKPEDKEGKAPSTPSAPASGSGTTGEAIGKINDALNKLQSAKNGSNEEYGRALDELDKAVEEYRKVAGQ.

7 consecutive transmembrane segments (helical) span residues 19 to 39, 63 to 83, 115 to 135, 176 to 196, 212 to 234, 261 to 281, and 290 to 310; these read LTWL…VVDL, IGLF…AGWF, FLVV…QQAW, SVLL…LGGI, YAKV…SYWL, AKIV…SVIV, and ISTV…PIMM. Basic and acidic residues predominate over residues 904 to 927; sequence DLGEAKGLKPESQNRDKPEDKEGK. Residues 904-950 form a disordered region; that stretch reads DLGEAKGLKPESQNRDKPEDKEGKAPSTPSAPASGSGTTGEAIGKIN. The span at 928 to 943 shows a compositional bias: low complexity; that stretch reads APSTPSAPASGSGTTG.

Belongs to the UPF0182 family.

The protein localises to the cell membrane. This chain is UPF0182 protein DIP0733, found in Corynebacterium diphtheriae (strain ATCC 700971 / NCTC 13129 / Biotype gravis).